Reading from the N-terminus, the 346-residue chain is Ribosomal RNA small subunit methyltransferase H (346 aa).

S-adenosyl-L-methionine contacts are provided by residues 46–48 (GGY), Asp-63, Phe-90, Asp-113, and Gln-120. Residues 270 to 346 (GGSAGSRHMP…LPETNELARS (77 aa)) form a disordered region.

Belongs to the methyltransferase superfamily. RsmH family.

Its subcellular location is the cytoplasm. It catalyses the reaction cytidine(1402) in 16S rRNA + S-adenosyl-L-methionine = N(4)-methylcytidine(1402) in 16S rRNA + S-adenosyl-L-homocysteine + H(+). In terms of biological role, specifically methylates the N4 position of cytidine in position 1402 (C1402) of 16S rRNA. This Brucella suis (strain ATCC 23445 / NCTC 10510) protein is Ribosomal RNA small subunit methyltransferase H.